The sequence spans 55 residues: Large ribosomal subunit protein bL33 (55 aa).

The protein belongs to the bacterial ribosomal protein bL33 family.

This chain is Large ribosomal subunit protein bL33, found in Xanthomonas axonopodis pv. citri (strain 306).